A 90-amino-acid chain; its full sequence is Molybdopterin synthase sulfur carrier subunit (90 aa).

Glycine 90 is modified (1-thioglycine; alternate). Glycine 90 bears the Glycyl adenylate; alternate mark.

This sequence belongs to the MoaD family. MOCS2A subfamily. As to quaternary structure, heterotetramer; composed of 2 small (Mocs2A) and 2 large (Mocs2B) subunits. In terms of processing, C-terminal thiocarboxylation occurs in 2 steps, it is first acyl-adenylated (-COAMP) via the hesA/moeB/thiF part of MOCS3, then thiocarboxylated (-COSH) via the rhodanese domain of MOCS3.

The protein resides in the cytoplasm. It functions in the pathway cofactor biosynthesis; molybdopterin biosynthesis. Functionally, acts as a sulfur carrier required for molybdopterin biosynthesis. Component of the molybdopterin synthase complex that catalyzes the conversion of precursor Z into molybdopterin by mediating the incorporation of 2 sulfur atoms into precursor Z to generate a dithiolene group. In the complex, serves as sulfur donor by being thiocarboxylated (-COSH) at its C-terminus by MOCS3. After interaction with Mocs2B, the sulfur is then transferred to precursor Z to form molybdopterin. This is Molybdopterin synthase sulfur carrier subunit from Drosophila yakuba (Fruit fly).